The sequence spans 636 residues: Autophagy-related protein 20 (636 aa).

2 disordered regions span residues 1–68 (MQIN…QPHE) and 84–163 (NYMQ…EGKK). Over residues 10–23 (NSVTHLENNSPSRL) the composition is skewed to polar residues. Positions 27–49 (KTVEEHKEHEPDLQTQSEMRRES) are enriched in basic and acidic residues. Residues 50–64 (NGSPKDTAVTNQNGD) are compositionally biased toward polar residues. Positions 122 to 133 (NRRKNSKERRRS) are enriched in basic residues. The PX domain maps to 160–305 (EGKKRAQILE…DFLDPNNKNW (146 aa)). Positions 196, 198, 222, and 271 each coordinate a 1,2-diacyl-sn-glycero-3-phospho-(1D-myo-inositol-3-phosphate).

It belongs to the sorting nexin family.

The protein localises to the endosome membrane. It is found in the preautophagosomal structure membrane. In terms of biological role, required for cytoplasm to vacuole transport (Cvt), pexophagy and mitophagy. Also involved in endoplasmic reticulum-specific autophagic process and is essential for the survival of cells subjected to severe ER stress. Functions in protein retrieval from the endocytic pathway. The sequence is that of Autophagy-related protein 20 (ATG20) from Kluyveromyces lactis (strain ATCC 8585 / CBS 2359 / DSM 70799 / NBRC 1267 / NRRL Y-1140 / WM37) (Yeast).